Consider the following 609-residue polypeptide: Glutamine--fructose-6-phosphate aminotransferase [isomerizing] (609 aa).

C2 serves as the catalytic Nucleophile; for GATase activity. The Glutamine amidotransferase type-2 domain maps to 2–218; sequence CGIVGAVAQR…EGDVAEVTRR (217 aa). 2 consecutive SIS domains span residues 286–426 and 458–599; these read AAEF…HNGM and LAED…VDQP. The active-site For Fru-6P isomerization activity is K604.

As to quaternary structure, homodimer.

It localises to the cytoplasm. The enzyme catalyses D-fructose 6-phosphate + L-glutamine = D-glucosamine 6-phosphate + L-glutamate. Functionally, catalyzes the first step in hexosamine metabolism, converting fructose-6P into glucosamine-6P using glutamine as a nitrogen source. In Shewanella oneidensis (strain ATCC 700550 / JCM 31522 / CIP 106686 / LMG 19005 / NCIMB 14063 / MR-1), this protein is Glutamine--fructose-6-phosphate aminotransferase [isomerizing].